The primary structure comprises 412 residues: MIEEEVLKIIKPTEEDKKGIEKVLEIIRERLNKLDFEVEGSFRKGTWLRQDTDVDVFVFYPKDVGKEYLERNALNDIINRIKDLDYTLAYAEHPYVIVNINNVEVDIVPALRVESGDRAITAVDRTPFHTKYVTSHLDERGKDEVRLLKRFMKGIGVYGAELKVQGFSGYATELLVIYYGSFRKVLEAASKWKHPIKIELTKPMRAFSEPLIIPDPVDPRRNVTAAVSLKNIATFSVAAKYYLKNPSMEFFFPSKKVEEKIKGDVLILRLNLDEKSSEDIIWGQIKRSVNKIERALKQSGFRVIDIQAWGDTSNIVIAVQLESKNIGQYYLNIGPQYYSETIDDFIQKNDNIWVGEDGRLYSIKERKEYNAEAIAKKNIVLKVKYNIESYWLQNTEDQQIMKFLRKTPTWLK.

ATP-binding residues include Ser41 and Lys44. CTP contacts are provided by Ser41 and Lys44. Mg(2+) contacts are provided by Asp53, Asp55, and Asp106. Positions 129, 149, and 158 each coordinate ATP. CTP-binding residues include His129, Lys149, and Tyr158.

Belongs to the tRNA nucleotidyltransferase/poly(A) polymerase family. Archaeal CCA-adding enzyme subfamily. In terms of assembly, homodimer. Forms a tetramer upon binding two tRNAs. However, tRNA-induced tetramer formation is not required for CCA addition. It depends on Mg(2+) as a cofactor.

The catalysed reaction is a tRNA precursor + 2 CTP + ATP = a tRNA with a 3' CCA end + 3 diphosphate. It catalyses the reaction a tRNA with a 3' CCA end + 2 CTP + ATP = a tRNA with a 3' CCACCA end + 3 diphosphate. Functionally, catalyzes the addition and repair of the essential 3'-terminal CCA sequence in tRNAs without using a nucleic acid template. Adds these three nucleotides in the order of C, C, and A to the tRNA nucleotide-73, using CTP and ATP as substrates and producing inorganic pyrophosphate. tRNA 3'-terminal CCA addition is required both for tRNA processing and repair. Also involved in tRNA surveillance by mediating tandem CCA addition to generate a CCACCA at the 3' terminus of unstable tRNAs. While stable tRNAs receive only 3'-terminal CCA, unstable tRNAs are marked with CCACCA and rapidly degraded. The structural flexibility of RNA controls the choice between CCA versus CCACCA addition: following the first CCA addition cycle, nucleotide-binding to the active site triggers a clockwise screw motion, producing torque on the RNA. This ejects stable RNAs, whereas unstable RNAs are refolded while bound to the enzyme and subjected to a second CCA catalytic cycle. This chain is CCA-adding enzyme, found in Saccharolobus shibatae (strain ATCC 51178 / DSM 5389 / JCM 8931 / NBRC 15437 / B12) (Sulfolobus shibatae).